The following is a 249-amino-acid chain: Eukaryotic translation initiation factor 3 subunit J-A (249 aa).

Residues 1-15 (MADADSWDADSFEPE) are compositionally biased toward acidic residues. Residues 1–104 (MADADSWDAD…DTPLTPEDEL (104 aa)) form a disordered region. Residues 16–27 (EPIKKAAVHDKW) show a composition bias toward basic and acidic residues. Acidic residues predominate over residues 28-52 (EGEDEDDDVKDNWDDDEEEEKEEEE). A coiled-coil region spans residues 34 to 96 (DDVKDNWDDD…QQLEETKRDT (63 aa)). Positions 53–96 (EKKTEAKPTEKKKLSEKIKEKENLQRKKQEELRKQQLEETKRDT) are enriched in basic and acidic residues.

It belongs to the eIF-3 subunit J family. Component of the eukaryotic translation initiation factor 3 (eIF-3) complex, which is composed of 13 subunits: eif3a, eif3b, eif3c, eif3d, eif3e, eif3f, eif3g, eif3h, eif3i, eif3j, eif3k, eif3l and eif3m.

The protein resides in the cytoplasm. In terms of biological role, component of the eukaryotic translation initiation factor 3 (eIF-3) complex, which is involved in protein synthesis of a specialized repertoire of mRNAs and, together with other initiation factors, stimulates binding of mRNA and methionyl-tRNAi to the 40S ribosome. The eIF-3 complex specifically targets and initiates translation of a subset of mRNAs involved in cell proliferation. The sequence is that of Eukaryotic translation initiation factor 3 subunit J-A (eif3ja) from Danio rerio (Zebrafish).